Here is a 326-residue protein sequence, read N- to C-terminus: MATLVELPDSVLLEIFSYLPVRDRIRISRVCHRWKRLVDDRWLWRHVDLTLYTMRPKVMWHLLRRYMASRLHSLRMGGYLFSGSQAPQLSPALLRALGQKCPNLKRLCLHVADLSMVPITSLPSTLRTLELHSCEISMAWLHKQQDPTVLPLLECIVLDRVPAFRDEHLQGLTRFRALRSLVLGGTYRVTETGLDAGLQELSYLQRLEVLGCTLSADSTLLAISRHLRDVRKIRLTVRGLSAPGLAVLEGMPALESLCLQGPLVTPEMPSPTEILSSCLTMPKLRVLELQGLGWEGQEAEKILCKGLPHCMVIVRACPKESMDWWM.

The F-box domain maps to 1-47; it reads MATLVELPDSVLLEIFSYLPVRDRIRISRVCHRWKRLVDDRWLWRHV. LRR repeat units lie at residues 51 to 78, 86 to 111, 113 to 133, 161 to 185, 186 to 211, 212 to 236, 237 to 261, and 266 to 291; these read LYTM…RMGG, APQL…CLHV, DLSM…ELHS, VPAF…VLGG, TYRV…EVLG, CTLS…IRLT, VRGL…CLQG, and PEMP…ELQG.

As to quaternary structure, interacts with SKP1 and CUL1.

Its pathway is protein modification; protein ubiquitination. Its function is as follows. Substrate-recognition component of the SCF (SKP1-CUL1-F-box protein)-type E3 ubiquitin ligase complex. Mediates the polyubiquitination and proteasomal degradation of CAMK1 leading to disruption of cyclin D1/CDK4 complex assembly which results in G1 cell cycle arrest in lung epithelia. This chain is F-box/LRR-repeat protein 12 (FBXL12), found in Homo sapiens (Human).